The chain runs to 57 residues: DNA gyrase inhibitor YacG (57 aa).

The Zn(2+) site is built by cysteine 10, cysteine 13, cysteine 25, and cysteine 29.

The protein belongs to the DNA gyrase inhibitor YacG family. In terms of assembly, interacts with GyrB. Requires Zn(2+) as cofactor.

Its function is as follows. Inhibits all the catalytic activities of DNA gyrase by preventing its interaction with DNA. Acts by binding directly to the C-terminal domain of GyrB, which probably disrupts DNA binding by the gyrase. This is DNA gyrase inhibitor YacG from Brucella melitensis biotype 1 (strain ATCC 23456 / CCUG 17765 / NCTC 10094 / 16M).